Reading from the N-terminus, the 126-residue chain is Small ribosomal subunit protein uS13 (126 aa).

Positions 98–126 (PVRGQSTKNNARTRKGRKKTVANKKKATK) are disordered. Over residues 108-126 (ARTRKGRKKTVANKKKATK) the composition is skewed to basic residues.

It belongs to the universal ribosomal protein uS13 family. As to quaternary structure, part of the 30S ribosomal subunit. Forms a loose heterodimer with protein S19. Forms two bridges to the 50S subunit in the 70S ribosome.

In terms of biological role, located at the top of the head of the 30S subunit, it contacts several helices of the 16S rRNA. In the 70S ribosome it contacts the 23S rRNA (bridge B1a) and protein L5 of the 50S subunit (bridge B1b), connecting the 2 subunits; these bridges are implicated in subunit movement. Contacts the tRNAs in the A and P-sites. The chain is Small ribosomal subunit protein uS13 from Bacteroides fragilis (strain ATCC 25285 / DSM 2151 / CCUG 4856 / JCM 11019 / LMG 10263 / NCTC 9343 / Onslow / VPI 2553 / EN-2).